Here is a 431-residue protein sequence, read N- to C-terminus: Methionine aminopeptidase 2-2 (431 aa).

The interval 1–76 (MAAQASEKLQ…PPRVPLSTLF (76 aa)) is disordered. The segment covering 35-47 (EAEDDSDDDEVED) has biased composition (acidic residues). Histidine 184 serves as a coordination point for substrate. Residues aspartate 204, aspartate 215, and histidine 284 each contribute to the a divalent metal cation site. Histidine 292 provides a ligand contact to substrate. Residues glutamate 317 and glutamate 412 each coordinate a divalent metal cation.

Belongs to the peptidase M24A family. Methionine aminopeptidase eukaryotic type 2 subfamily. Co(2+) is required as a cofactor. The cofactor is Zn(2+). Requires Mn(2+) as cofactor. It depends on Fe(2+) as a cofactor.

It localises to the cytoplasm. It catalyses the reaction Release of N-terminal amino acids, preferentially methionine, from peptides and arylamides.. Its function is as follows. Cotranslationally removes the N-terminal methionine from nascent proteins. The N-terminal methionine is often cleaved when the second residue in the primary sequence is small and uncharged (Met-Ala-, Cys, Gly, Pro, Ser, Thr, or Val). This is Methionine aminopeptidase 2-2 from Aspergillus niger (strain ATCC MYA-4892 / CBS 513.88 / FGSC A1513).